The chain runs to 328 residues: Formimidoylglutamase (328 aa).

Mn(2+) is bound by residues His-133, Asp-159, His-161, Asp-163, Asp-253, and Asp-255.

The protein belongs to the arginase family. Mn(2+) serves as cofactor.

The enzyme catalyses N-formimidoyl-L-glutamate + H2O = formamide + L-glutamate. It participates in amino-acid degradation; L-histidine degradation into L-glutamate; L-glutamate from N-formimidoyl-L-glutamate (hydrolase route): step 1/1. Functionally, catalyzes the conversion of N-formimidoyl-L-glutamate to L-glutamate and formamide. In Streptococcus pyogenes serotype M1, this protein is Formimidoylglutamase.